Consider the following 283-residue polypeptide: 4-diphosphocytidyl-2-C-methyl-D-erythritol kinase (283 aa).

K10 is an active-site residue. An ATP-binding site is contributed by 99-109; the sequence is PMGGGLGGGSS. D141 is an active-site residue.

Belongs to the GHMP kinase family. IspE subfamily. In terms of assembly, homodimer.

The enzyme catalyses 4-CDP-2-C-methyl-D-erythritol + ATP = 4-CDP-2-C-methyl-D-erythritol 2-phosphate + ADP + H(+). It functions in the pathway isoprenoid biosynthesis; isopentenyl diphosphate biosynthesis via DXP pathway; isopentenyl diphosphate from 1-deoxy-D-xylulose 5-phosphate: step 3/6. Catalyzes the phosphorylation of the position 2 hydroxy group of 4-diphosphocytidyl-2C-methyl-D-erythritol. In Salmonella arizonae (strain ATCC BAA-731 / CDC346-86 / RSK2980), this protein is 4-diphosphocytidyl-2-C-methyl-D-erythritol kinase.